Consider the following 316-residue polypeptide: tRNA dimethylallyltransferase (316 aa).

17-24 is a binding site for ATP; that stretch reads GPTASGKT. 19 to 24 is a substrate binding site; sequence TASGKT. Interaction with substrate tRNA stretches follow at residues 42–45, 166–170, and 247–252; these read DSAL, QRLSR, and RCVGYR.

It belongs to the IPP transferase family. Monomer. The cofactor is Mg(2+).

It catalyses the reaction adenosine(37) in tRNA + dimethylallyl diphosphate = N(6)-dimethylallyladenosine(37) in tRNA + diphosphate. In terms of biological role, catalyzes the transfer of a dimethylallyl group onto the adenine at position 37 in tRNAs that read codons beginning with uridine, leading to the formation of N6-(dimethylallyl)adenosine (i(6)A). The chain is tRNA dimethylallyltransferase from Citrobacter koseri (strain ATCC BAA-895 / CDC 4225-83 / SGSC4696).